The chain runs to 353 residues: Ferrochelatase (353 aa).

Positions 1 to 13 (MTLERTGRDEEKA) are enriched in basic and acidic residues. Residues 1 to 23 (MTLERTGRDEEKALTQPPSGHSS) are disordered. The Fe cation site is built by His-223 and Glu-304.

It belongs to the ferrochelatase family.

It localises to the cytoplasm. The catalysed reaction is heme b + 2 H(+) = protoporphyrin IX + Fe(2+). It participates in porphyrin-containing compound metabolism; protoheme biosynthesis; protoheme from protoporphyrin-IX: step 1/1. Its function is as follows. Catalyzes the ferrous insertion into protoporphyrin IX. In Chelativorans sp. (strain BNC1), this protein is Ferrochelatase.